Reading from the N-terminus, the 463-residue chain is L-seryl-tRNA(Sec) selenium transferase (463 aa).

Lys295 carries the N6-(pyridoxal phosphate)lysine modification.

Belongs to the SelA family. In terms of assembly, homodecamer; pentamer of dimers. Binds only one seryl-tRNA(Sec) per dimer. Pyridoxal 5'-phosphate serves as cofactor.

The protein localises to the cytoplasm. It catalyses the reaction L-seryl-tRNA(Sec) + selenophosphate + H(+) = L-selenocysteinyl-tRNA(Sec) + phosphate. Its pathway is aminoacyl-tRNA biosynthesis; selenocysteinyl-tRNA(Sec) biosynthesis; selenocysteinyl-tRNA(Sec) from L-seryl-tRNA(Sec) (bacterial route): step 1/1. In terms of biological role, converts seryl-tRNA(Sec) to selenocysteinyl-tRNA(Sec) required for selenoprotein biosynthesis. The polypeptide is L-seryl-tRNA(Sec) selenium transferase (Escherichia coli (strain 55989 / EAEC)).